A 1273-amino-acid chain; its full sequence is Protein sax-3 (1273 aa).

Positions 1-23 (MFNRKTLLCTILLVLQAVIRSFC) are cleaved as a signal peptide. 5 Ig-like C2-type domains span residues 31-127 (PVII…GSLK), 133-222 (EDFR…ARLS), 227-312 (PKFE…AHLR), 317-411 (PSFQ…LKVT), and 425-511 (PTIE…ASLT). Disulfide bonds link Cys-52/Cys-110, Cys-154/Cys-205, Cys-248/Cys-296, Cys-338/Cys-393, and Cys-446/Cys-495. Fibronectin type-III domains lie at 533 to 628 (SPTQ…TSKP), 653 to 750 (QLIK…TAEA), and 755 to 849 (PPED…MNQD). Residues 874 to 894 (VPVIVIVAILIIFVVIIIAYC) form a helical membrane-spanning segment. Residues 1033 to 1273 (APAMPTNPVP…NNGIVTQEQT (241 aa)) are disordered. A compositionally biased stretch (pro residues) spans 1037-1046 (PTNPVPPEPP). The segment covering 1096 to 1105 (QLHSSDGTGS) has biased composition (polar residues). A compositionally biased stretch (basic and acidic residues) spans 1106–1115 (SKERTGERRT). The segment covering 1125-1136 (IPPPPSNPPPPG) has biased composition (pro residues). The segment covering 1145-1156 (QTATRRQLNRGS) has biased composition (polar residues). Positions 1207–1222 (MDDDGGSSEADGENSE) are enriched in acidic residues. Residues 1240-1273 (SASTLAHSCYGTNGTAQRFRSIPRNNGIVTQEQT) show a composition bias toward polar residues.

Belongs to the immunoglobulin superfamily. ROBO/SAX3 family. As to expression, expressed in the AVG interneuron and the male-specific sensory neuron HOA.

Its subcellular location is the membrane. Functionally, required to confine migrating sex myoblasts to the ventral muscle quadrants during their migration through the body and for multiple aspects of sensory, motor, and interneuron axon guidance. The polypeptide is Protein sax-3 (Caenorhabditis elegans).